A 515-amino-acid polypeptide reads, in one-letter code: MTFILTETSAGYAVLKAKDKKIYKSESILEELSTPELVTSQFKVKGFSKFDSAASALEEVNAIVDGRVSDKLAALLNEFKDEKKSALVVADPKLGNAINKLDLPFDVVAESASLDLFRAIRENLPSLLPGLTEKDLATMSLGLAHSLGRHKLKFSPDKVDTMIVQAIALLDDLDKELNTYAMRIKEWYGWHFPEMAKIVADNIAYARVIKTMGYRSNASETDLSEVLPEEVEAALKVAAEVSMGTEITEFDLENIQCLADQVIDFAEYREQLSNYLNARMAAIAPNLTALVGELVGARLIAHSGSLVNLAKAPASTVQILGAEKALFRALKTKHDTPKYGIIYHASLIGQASGKNKGKIARMLAAKASVSMRYDAFAEEREDVPILGIDNRIKVENRLRQLEGKEIVGTVRPDVNKIEHKKVDLSTGKQYNADADTVGNTTAGADSDDEDSDSEEEVKEKKAKKEKKEKKDKKEKKDKKDKKEKKDKKEKKEKKDKKRKREDDDDEPKKEKKSKK.

Positions 283-403 (IAPNLTALVG…VENRLRQLEG (121 aa)) constitute a Nop domain. Residues 428-515 (KQYNADADTV…EPKKEKKSKK (88 aa)) form a disordered region. A compositionally biased stretch (acidic residues) spans 445–456 (DSDDEDSDSEEE). The segment covering 460 to 499 (KKAKKEKKEKKDKKEKKDKKDKKEKKDKKEKKEKKDKKRK) has biased composition (basic residues).

It belongs to the NOP5/NOP56 family.

The protein resides in the nucleus. Its subcellular location is the nucleolus. Required for pre-18S rRNA processing. May bind microtubules. The sequence is that of Nucleolar protein 58 (NOP58) from Yarrowia lipolytica (strain CLIB 122 / E 150) (Yeast).